The sequence spans 353 residues: Protein RecA (353 aa).

Residue Gly65–Thr72 coordinates ATP. The segment covering Asp334–Asn345 has biased composition (basic and acidic residues). The tract at residues Asp334 to Phe353 is disordered.

Belongs to the RecA family.

It is found in the cytoplasm. In terms of biological role, can catalyze the hydrolysis of ATP in the presence of single-stranded DNA, the ATP-dependent uptake of single-stranded DNA by duplex DNA, and the ATP-dependent hybridization of homologous single-stranded DNAs. It interacts with LexA causing its activation and leading to its autocatalytic cleavage. In Edwardsiella ictaluri (strain 93-146), this protein is Protein RecA.